A 213-amino-acid polypeptide reads, in one-letter code: Uracil phosphoribosyltransferase (213 aa).

Residues Arg-78, Arg-103, and 131–139 (DPMLATGGT) each bind 5-phospho-alpha-D-ribose 1-diphosphate. Uracil is bound by residues Ile-197 and 202 to 204 (GDA). Asp-203 contacts 5-phospho-alpha-D-ribose 1-diphosphate.

It belongs to the UPRTase family. It depends on Mg(2+) as a cofactor.

The catalysed reaction is UMP + diphosphate = 5-phospho-alpha-D-ribose 1-diphosphate + uracil. It participates in pyrimidine metabolism; UMP biosynthesis via salvage pathway; UMP from uracil: step 1/1. Allosterically activated by GTP. In terms of biological role, catalyzes the conversion of uracil and 5-phospho-alpha-D-ribose 1-diphosphate (PRPP) to UMP and diphosphate. In Bifidobacterium longum subsp. infantis (strain ATCC 15697 / DSM 20088 / JCM 1222 / NCTC 11817 / S12), this protein is Uracil phosphoribosyltransferase.